We begin with the raw amino-acid sequence, 458 residues long: MAGSPSRAAGRRLQLPLLCLFLQGATAVLFAVFVRYNHKTDAALWHRSNHSNADNEFYFRYPSFQDVHAMVFVGFGFLMVFLQRYGFSSVGFTFLLAAFALQWSTLVQGFLHSFHGGHIHVGVESMINADFCAGAVLISFGAVLGKTGPTQLLLMALLEVVLFGINEFVLLHLLGVRDAGGSMTIHTFGAYFGLVLSRVLYRPQLEKSKHRQGSVYHSDLFAMIGTIFLWIFWPSFNAALTALGAGQHRTALNTYYSLAASTLGTFALSALVGEDGRLDMVHIQNAALAGGVVVGTSSEMMLTPFGALAAGFLAGTVSTLGYKFFTPILESKFKVQDTCGVHNLHGMPGVLGALLGVLVAGLATHEAYGDGLESVFPLIAEGQRSATSQAMHQLFGLFVTLMFASVGGGLGGLLLKLPFLDSPPDSQHYEDQVHWQVPGEHEDKAQRPLRVEEADTQA.

Residues 1–13 are Cytoplasmic-facing; that stretch reads MAGSPSRAAGRRL. Residues 14–34 form a helical membrane-spanning segment; the sequence is QLPLLCLFLQGATAVLFAVFV. Residues 35–61 lie on the Extracellular side of the membrane; sequence RYNHKTDAALWHRSNHSNADNEFYFRY. Asn49 carries an N-linked (GlcNAc...) asparagine glycan. The helical transmembrane segment at 62 to 82 threads the bilayer; it reads PSFQDVHAMVFVGFGFLMVFL. The Cytoplasmic segment spans residues 83–86; it reads QRYG. Residues 87–107 traverse the membrane as a helical segment; sequence FSSVGFTFLLAAFALQWSTLV. Residues 108–124 lie on the Extracellular side of the membrane; it reads QGFLHSFHGGHIHVGVE. Residues 125–145 form a helical membrane-spanning segment; that stretch reads SMINADFCAGAVLISFGAVLG. Residues 146 to 149 lie on the Cytoplasmic side of the membrane; sequence KTGP. The chain crosses the membrane as a helical span at residues 150-170; sequence TQLLLMALLEVVLFGINEFVL. Residues 171–178 are Extracellular-facing; it reads LHLLGVRD. A helical transmembrane segment spans residues 179–201; the sequence is AGGSMTIHTFGAYFGLVLSRVLY. At 202 to 219 the chain is on the cytoplasmic side; that stretch reads RPQLEKSKHRQGSVYHSD. The chain crosses the membrane as a helical span at residues 220–240; the sequence is LFAMIGTIFLWIFWPSFNAAL. Over 241–251 the chain is Extracellular; that stretch reads TALGAGQHRTA. Residues 252-272 traverse the membrane as a helical segment; it reads LNTYYSLAASTLGTFALSALV. Topologically, residues 273-282 are cytoplasmic; sequence GEDGRLDMVH. The chain crosses the membrane as a helical span at residues 283-303; it reads IQNAALAGGVVVGTSSEMMLT. Position 304 (Pro304) is a topological domain, extracellular. The helical transmembrane segment at 305-325 threads the bilayer; sequence FGALAAGFLAGTVSTLGYKFF. Topologically, residues 326-346 are cytoplasmic; the sequence is TPILESKFKVQDTCGVHNLHG. A helical membrane pass occupies residues 347-367; the sequence is MPGVLGALLGVLVAGLATHEA. Over 368–393 the chain is Extracellular; it reads YGDGLESVFPLIAEGQRSATSQAMHQ. Residues 394-414 traverse the membrane as a helical segment; the sequence is LFGLFVTLMFASVGGGLGGLL. The Cytoplasmic portion of the chain corresponds to 415–458; sequence LKLPFLDSPPDSQHYEDQVHWQVPGEHEDKAQRPLRVEEADTQA. Positions 416 to 424 are interaction with ANK3; that stretch reads KLPFLDSPP. Positions 436-458 are disordered; sequence QVPGEHEDKAQRPLRVEEADTQA.

It belongs to the ammonium transporter (TC 2.A.49) family. Rh subfamily. As to quaternary structure, interacts (via C-terminus) with ANK2 and ANK3; required for targeting to the basolateral membrane. N-glycosylated. Specifically expressed in kidney. Also detected in liver and ovary.

It is found in the cell membrane. The protein resides in the basolateral cell membrane. It carries out the reaction NH4(+)(in) = NH4(+)(out). It catalyses the reaction methylamine(out) = methylamine(in). The enzyme catalyses CO2(out) = CO2(in). Functionally, ammonium transporter involved in the maintenance of acid-base homeostasis. Transports ammonium and its related derivative methylammonium across the basolateral plasma membrane of epithelial cells likely contributing to renal transepithelial ammonia transport and ammonia metabolism. May transport either NH4(+) or NH3 ammonia species predominantly mediating an electrogenic NH4(+) transport. May act as a CO2 channel providing for renal acid secretion. This is Ammonium transporter Rh type B from Homo sapiens (Human).